A 382-amino-acid chain; its full sequence is Chaperone protein DnaJ (382 aa).

Residues 5 to 70 enclose the J domain; the sequence is DYYEVLGVSR…DKKAAYDRYG (66 aa). Residues 141–219 form a CR-type zinc finger; that stretch reads GVQKTINVPA…CHGAGRVEKE (79 aa). Residues Cys154, Cys157, Cys171, Cys174, Cys193, Cys196, Cys207, and Cys210 each contribute to the Zn(2+) site. CXXCXGXG motif repeat units follow at residues 154–161, 171–178, 193–200, and 207–214; these read CDACKGTG, CPTCSGMG, CPTCNGMG, and CKVCHGAG.

It belongs to the DnaJ family. Homodimer. It depends on Zn(2+) as a cofactor.

The protein resides in the cytoplasm. Participates actively in the response to hyperosmotic and heat shock by preventing the aggregation of stress-denatured proteins and by disaggregating proteins, also in an autonomous, DnaK-independent fashion. Unfolded proteins bind initially to DnaJ; upon interaction with the DnaJ-bound protein, DnaK hydrolyzes its bound ATP, resulting in the formation of a stable complex. GrpE releases ADP from DnaK; ATP binding to DnaK triggers the release of the substrate protein, thus completing the reaction cycle. Several rounds of ATP-dependent interactions between DnaJ, DnaK and GrpE are required for fully efficient folding. Also involved, together with DnaK and GrpE, in the DNA replication of plasmids through activation of initiation proteins. The protein is Chaperone protein DnaJ of Cereibacter sphaeroides (strain ATCC 17023 / DSM 158 / JCM 6121 / CCUG 31486 / LMG 2827 / NBRC 12203 / NCIMB 8253 / ATH 2.4.1.) (Rhodobacter sphaeroides).